The following is a 107-amino-acid chain: Large ribosomal subunit protein uL24 (107 aa).

This sequence belongs to the universal ribosomal protein uL24 family. In terms of assembly, part of the 50S ribosomal subunit.

One of two assembly initiator proteins, it binds directly to the 5'-end of the 23S rRNA, where it nucleates assembly of the 50S subunit. In terms of biological role, one of the proteins that surrounds the polypeptide exit tunnel on the outside of the subunit. This is Large ribosomal subunit protein uL24 from Mesomycoplasma hyopneumoniae (strain 7448) (Mycoplasma hyopneumoniae).